Reading from the N-terminus, the 135-residue chain is Glutaredoxin-C5 (135 aa).

The Glutaredoxin domain maps to 29–134; it reads AERVERLASE…PLLKEAGALW (106 aa). Cysteine 49 and cysteine 52 are oxidised to a cystine. The Responsive for interaction with TGA factors motif lies at 132–135; the sequence is ALWL.

This sequence belongs to the glutaredoxin family. CC-type subfamily.

Its subcellular location is the cytoplasm. It is found in the nucleus. Functionally, has a glutathione-disulfide oxidoreductase activity in the presence of NADPH and glutathione reductase. Reduces low molecular weight disulfides and proteins. This chain is Glutaredoxin-C5 (GRXC5), found in Oryza sativa subsp. japonica (Rice).